A 139-amino-acid polypeptide reads, in one-letter code: Succinate dehydrogenase assembly factor 2, mitochondrial (139 aa).

The N-terminal 28 residues, 1 to 28 (MLRKTNLSNITTLLRSARCMNRMPQLRF), are a transit peptide targeting the mitochondrion.

It belongs to the SDHAF2 family. In terms of assembly, interacts with the flavoprotein subunit within the SDH catalytic dimer.

The protein resides in the mitochondrion. It is found in the mitochondrion matrix. Functionally, plays an essential role in the assembly of succinate dehydrogenase (SDH), an enzyme complex (also referred to as respiratory complex II) that is a component of both the tricarboxylic acid (TCA) cycle and the mitochondrial electron transport chain, and which couples the oxidation of succinate to fumarate with the reduction of ubiquinone (coenzyme Q) to ubiquinol. Required for flavinylation (covalent attachment of FAD) of the flavoprotein subunit of the SDH catalytic dimer. The protein is Succinate dehydrogenase assembly factor 2, mitochondrial of Schizosaccharomyces pombe (strain 972 / ATCC 24843) (Fission yeast).